We begin with the raw amino-acid sequence, 212 residues long: Ribosomal RNA small subunit methyltransferase G (212 aa).

S-adenosyl-L-methionine is bound by residues Gly73, Phe78, Ile124–Glu125, and Arg137.

This sequence belongs to the methyltransferase superfamily. RNA methyltransferase RsmG family.

The protein localises to the cytoplasm. Functionally, specifically methylates the N7 position of a guanine in 16S rRNA. This is Ribosomal RNA small subunit methyltransferase G from Karelsulcia muelleri (strain GWSS) (Sulcia muelleri).